The primary structure comprises 110 residues: Quaternary ammonium compound-resistance protein QacF (110 aa).

The next 4 membrane-spanning stretches (helical) occupy residues 1 to 21 (MKNW…TSAL), 31 to 51 (VPSV…SLAL), 58 to 78 (IAYA…AWIF), and 85 to 105 (FWAF…NLLS).

Belongs to the drug/metabolite transporter (DMT) superfamily. Small multidrug resistance (SMR) (TC 2.A.7.1) family.

It is found in the cell membrane. Multidrug exporter. Is implicated for the resistance to bacteriocidal quaternary ammonium compounds. The protein is Quaternary ammonium compound-resistance protein QacF (qacF) of Klebsiella aerogenes (Enterobacter aerogenes).